A 438-amino-acid polypeptide reads, in one-letter code: Cysteine--tRNA ligase (438 aa).

Residue Cys28 coordinates Zn(2+). Positions 30 to 40 (PTVYNHLHLGN) match the 'HIGH' region motif. Cys207, His232, and Glu236 together coordinate Zn(2+). Residues 264–268 (KMSKS) carry the 'KMSKS' region motif. Lys267 lines the ATP pocket.

It belongs to the class-I aminoacyl-tRNA synthetase family. Monomer. Zn(2+) serves as cofactor.

Its subcellular location is the cytoplasm. The enzyme catalyses tRNA(Cys) + L-cysteine + ATP = L-cysteinyl-tRNA(Cys) + AMP + diphosphate. This is Cysteine--tRNA ligase from Onion yellows phytoplasma (strain OY-M).